Here is a 420-residue protein sequence, read N- to C-terminus: Lactosylceramide alpha-2,3-sialyltransferase (420 aa).

Positions M1–L39 are disordered. The Cytoplasmic segment spans residues M1–D67. The segment covering A9–T18 has biased composition (basic and acidic residues). The span at A20 to A29 shows a compositional bias: low complexity. Residues I68–N88 form a helical membrane-spanning segment. At H89–F420 the chain is on the lumenal side. C197 and C355 form a disulfide bridge. N238 is a glycosylation site (N-linked (GlcNAc...) asparagine).

It belongs to the glycosyltransferase 29 family.

The protein localises to the golgi apparatus membrane. The catalysed reaction is a beta-D-Gal-(1-&gt;4)-beta-D-Glc-(1&lt;-&gt;1)-Cer(d18:1(4E)) + CMP-N-acetyl-beta-neuraminate = a ganglioside GM3 (d18:1(4E)) + CMP + H(+). The enzyme catalyses ganglioside GA2 (d18:1(4E)/18:0) + CMP-N-acetyl-beta-neuraminate = ganglioside GM2 (d18:1(4E)/18:0) + CMP + H(+). It carries out the reaction a beta-D-Gal-(1&lt;-&gt;1')-ceramide + CMP-N-acetyl-beta-neuraminate = N-acetyl-alpha-neuraminosyl-(2-&gt;3)-beta-D-galactosyl-(1&lt;-&gt;1')-ceramide + CMP + H(+). It catalyses the reaction ganglioside GA1 (d18:1(4E)/18:0) + CMP-N-acetyl-beta-neuraminate = ganglioside GM1 (d18:1(4E)/18:0) + CMP + H(+). Functionally, transfers the sialyl group (N-acetyl-alpha-neuraminyl or NeuAc) from CMP-NeuAc to the non-reducing terminal galactose (Gal) of glycosphingolipids forming gangliosides (important molecules involved in the regulation of multiple cellular processes, including cell proliferation and differentiation, apoptosis, embryogenesis, development, and oncogenesis). Mainly involved in the biosynthesis of ganglioside GM3 but can also use different glycolipids as substrate acceptors such as D-galactosylceramide (GalCer), asialo-GM2 (GA2) and asialo-GM1 (GA1), although less preferentially than beta-D-Gal-(1-&gt;4)-beta-D-Glc-(1&lt;-&gt;1)-Cer (LacCer). This chain is Lactosylceramide alpha-2,3-sialyltransferase (ST3GAL5), found in Bos taurus (Bovine).